The chain runs to 562 residues: AT-rich interactive domain-containing protein 1 (562 aa).

The ARID domain occupies 43–136; it reads KELISLFRPL…YLDAFGRWLN (94 aa). An ELM2 domain is found at 358–448; it reads PCALVGSKFQ…KLELGPAFYM (91 aa).

It localises to the nucleus. This chain is AT-rich interactive domain-containing protein 1 (ARID1), found in Arabidopsis thaliana (Mouse-ear cress).